A 480-amino-acid chain; its full sequence is Ochratoxinase (480 aa).

Zn(2+)-binding residues include His111, His113, Lys246, His287, and His307. The active site involves Lys246. Residue Asp378 is part of the active site.

It belongs to the metallo-dependent hydrolases superfamily. Ochratoxinase amidase 2 family. Homooctamer. Requires Zn(2+) as cofactor.

Its subcellular location is the secreted. It carries out the reaction ochratoxin A + H2O = ochratoxin alpha + L-phenylalanine. With respect to regulation, the Zn(2+)-specific chelator 1,10-phenanthroline inhibits the enzyme activity. Carboxypeptidase that catalyzes the release of a C-terminal amino acid with specific catalytic activity for aromatic amino acids such as phenylalanine. Is able to degrade ochratoxin A, one of the five major mycotoxins most harmful to humans and animals that is produced by Aspergillus and Penicillium species and occurs in a wide range of agricultural products. The chain is Ochratoxinase from Aspergillus niger (strain ATCC 1015 / CBS 113.46 / FGSC A1144 / LSHB Ac4 / NCTC 3858a / NRRL 328 / USDA 3528.7).